Consider the following 345-residue polypeptide: GTPase Obg (345 aa).

Positions 1 to 158 (MFIDSVKITL…RLVRLELKLI (158 aa)) constitute an Obg domain. Positions 159–339 (ADVGLVGFPN…LKFMLLEEIK (181 aa)) constitute an OBG-type G domain. Residues 165-172 (GFPNVGKS), 190-194 (FTTLT), 212-215 (DIPG), 280-283 (SKSD), and 320-322 (SSL) each bind GTP. Residues S172 and T192 each coordinate Mg(2+).

Belongs to the TRAFAC class OBG-HflX-like GTPase superfamily. OBG GTPase family. In terms of assembly, monomer. Mg(2+) serves as cofactor.

The protein localises to the cytoplasm. In terms of biological role, an essential GTPase which binds GTP, GDP and possibly (p)ppGpp with moderate affinity, with high nucleotide exchange rates and a fairly low GTP hydrolysis rate. Plays a role in control of the cell cycle, stress response, ribosome biogenesis and in those bacteria that undergo differentiation, in morphogenesis control. In Campylobacter jejuni subsp. jejuni serotype O:6 (strain 81116 / NCTC 11828), this protein is GTPase Obg.